Here is a 521-residue protein sequence, read N- to C-terminus: FAD-dependent monooxygenase DEP2 (521 aa).

An N-terminal signal peptide occupies residues 1–22 (MHDSPPFKVIIVGAGVTGLTLA). FAD contacts are provided by Asp-36 and Arg-109. Residues Asn-139 and Asn-220 are each glycosylated (N-linked (GlcNAc...) asparagine). The FAD site is built by Asp-310 and Gly-323. A helical transmembrane segment spans residues 477–497 (ILVLWAGLWLAICFFHLVFSG). Asn-515 is a glycosylation site (N-linked (GlcNAc...) asparagine).

This sequence belongs to the paxM FAD-dependent monooxygenase family. The cofactor is FAD.

It is found in the membrane. The protein operates within polyketide biosynthesis. In terms of biological role, part of the gene cluster that mediates the biosynthesis of depudecin, a highly oxidized eleven-carbon linear polyketide that acts as a histone deacetylase (HDAC) inhibitor and makes a small contribution to pathogenesis. The reducing polyketide synthase DEP5 is the central enzyme in depudecin biosynthesis by yielding the backbone polyketide chain. The monooxygenases DEP2 and DEP4, as well as the uncharacterized protein DEP1, then act as tailoring enzymes to modify the intermediate polyketide chain into depudecin. This Fusarium langsethiae protein is FAD-dependent monooxygenase DEP2.